The chain runs to 158 residues: Cyclic pyranopterin monophosphate synthase (158 aa).

Residues 76 to 78 and 114 to 115 contribute to the substrate site; these read LCH and ME. Asp129 is a catalytic residue.

It belongs to the MoaC family. As to quaternary structure, homohexamer; trimer of dimers.

The enzyme catalyses (8S)-3',8-cyclo-7,8-dihydroguanosine 5'-triphosphate = cyclic pyranopterin phosphate + diphosphate. The protein operates within cofactor biosynthesis; molybdopterin biosynthesis. Catalyzes the conversion of (8S)-3',8-cyclo-7,8-dihydroguanosine 5'-triphosphate to cyclic pyranopterin monophosphate (cPMP). The sequence is that of Cyclic pyranopterin monophosphate synthase from Shewanella frigidimarina (strain NCIMB 400).